The chain runs to 907 residues: Protein translocase subunit SecA (907 aa).

ATP contacts are provided by residues glutamine 87, 105–109 (GEGKT), and aspartate 510. Residues cysteine 892, cysteine 894, cysteine 903, and histidine 904 each coordinate Zn(2+).

The protein belongs to the SecA family. In terms of assembly, monomer and homodimer. Part of the essential Sec protein translocation apparatus which comprises SecA, SecYEG and auxiliary proteins SecDF-YajC and YidC. Requires Zn(2+) as cofactor.

It is found in the cell inner membrane. Its subcellular location is the cytoplasm. The enzyme catalyses ATP + H2O + cellular proteinSide 1 = ADP + phosphate + cellular proteinSide 2.. Functionally, part of the Sec protein translocase complex. Interacts with the SecYEG preprotein conducting channel. Has a central role in coupling the hydrolysis of ATP to the transfer of proteins into and across the cell membrane, serving both as a receptor for the preprotein-SecB complex and as an ATP-driven molecular motor driving the stepwise translocation of polypeptide chains across the membrane. The polypeptide is Protein translocase subunit SecA (Acinetobacter baumannii (strain ACICU)).